Reading from the N-terminus, the 363-residue chain is Pulmonary surfactant-associated protein B (363 aa).

The N-terminal stretch at 1-16 (LLWLLLLPTLCGLGAA) is a signal peptide. A propeptide spanning residues 17–180 (DWSAPSLACA…PHTQDLSEQQ (164 aa)) is cleaved from the precursor. The region spanning 18-58 (WSAPSLACARGPAFWCQSLEQALQCRALGHCLQEVWGNARA) is the Saposin A-type domain. 3 Saposin B-type domains span residues 58–140 (ADDL…KPGL), 184–261 (PLPY…SHED), and 277–352 (QESK…RTTF). 9 cysteine pairs are disulfide-bonded: Cys-62-Cys-136, Cys-65-Cys-130, Cys-93-Cys-105, Cys-188-Cys-257, Cys-191-Cys-251, Cys-215-Cys-226, Cys-281-Cys-348, Cys-284-Cys-342, and Cys-307-Cys-317. Positions 260 to 363 (EDSAGPALAS…PLQCIHIPHF (104 aa)) are excised as a propeptide. Asn-293 is a glycosylation site (N-linked (GlcNAc...) asparagine).

As to quaternary structure, homodimer; disulfide-linked.

It is found in the secreted. The protein resides in the extracellular space. The protein localises to the surface film. Its function is as follows. Pulmonary surfactant-associated proteins promote alveolar stability by lowering the surface tension at the air-liquid interface in the peripheral air spaces. SP-B increases the collapse pressure of palmitic acid to nearly 70 millinewtons per meter. This chain is Pulmonary surfactant-associated protein B (SFTPB), found in Canis lupus familiaris (Dog).